We begin with the raw amino-acid sequence, 456 residues long: MTSDPLASPSFADRWRRGQQLFWTWLADLRLAILLLLAIAIASATGTVIEQGQSLAFYQENYPTDPALFGFLSWRWILSLGLDHVYRAGWFLGLLILFGASLTACTFRRQWPALRAAQRWQFYQEPRQFTKLALSASLPQGKLDSLEPLLLQRRYRLFRADDVLYARRGLAGRVGPILVHAGMLVVLGGAIWGSLGGFYAQEMIPSGETFQVRNIVDAGPWSGSRIPQDWAVKVNRFWIDYAPDGRIDQFYSDLSVVDREGQEQDRQTIHVNQPLRYGGLTFYQADWAIAAAQVRLNNSPVLQLPMAQLPAAGRIWGTFVPTKPDLSSGVSLIAKDLQGTAVIYGSNGEPLGTLRKGMAIEVEGIRLSLVDLVGSTGLQIKSDPGIPWVYAGFLFVMVGVVCSYVSHAQVWALEQDGQLYIGGRSNRALVAFEQEMLAVLAQLDAQSNHSAETAIA.

The next 3 membrane-spanning stretches (helical) occupy residues 29–49, 88–108, and 174–194; these read LRLA…GTVI, AGWF…CTFR, and VGPI…IWGS.

Belongs to the Ccs1/CcsB family. In terms of assembly, may interact with CcsA.

It localises to the cellular thylakoid membrane. Its function is as follows. Required during biogenesis of c-type cytochromes (cytochrome c6 and cytochrome f) at the step of heme attachment. The protein is Cytochrome c biogenesis protein CcsB of Synechococcus sp. (strain ATCC 27144 / PCC 6301 / SAUG 1402/1) (Anacystis nidulans).